We begin with the raw amino-acid sequence, 141 residues long: Putative pre-16S rRNA nuclease (141 aa).

This sequence belongs to the YqgF nuclease family.

Its subcellular location is the cytoplasm. Its function is as follows. Could be a nuclease involved in processing of the 5'-end of pre-16S rRNA. The protein is Putative pre-16S rRNA nuclease of Cupriavidus taiwanensis (strain DSM 17343 / BCRC 17206 / CCUG 44338 / CIP 107171 / LMG 19424 / R1) (Ralstonia taiwanensis (strain LMG 19424)).